The primary structure comprises 486 residues: Zinc finger CCCH domain-containing protein 49 (486 aa).

The segment at 157-184 (RNRAHVCSFYVRGECTRGAECPYRHEMP) adopts a C3H1-type zinc-finger fold. The region spanning 228 to 301 (RTLYIGGLDS…VRLKLMWGKP (74 aa)) is the RRM domain. 2 disordered regions span residues 329 to 348 (SQQQSGDQPQPPGMEGQQQP) and 379 to 486 (LVES…NGMT). Composition is skewed to low complexity over residues 389–407 (PGPQQAGQGQASSSSGQSY) and 415–430 (YHGGQYPPYYPPYGGY). A compositionally biased stretch (pro residues) spans 431–444 (MPPPRMPYQQPPQY). A compositionally biased stretch (low complexity) spans 445–486 (PAYQPMLAPPAQSQASSLQQPAPATQQLGQGPQQQTTQNGMT).

This is Zinc finger CCCH domain-containing protein 49 from Oryza sativa subsp. japonica (Rice).